Reading from the N-terminus, the 191-residue chain is Auxin-responsive protein IAA32 (191 aa).

The EAR-like (transcriptional repression) motif lies at 32-36 (LGLSL). In terms of domain architecture, PB1 spans 98–184 (YAYVKVNLDG…SVDRMRIARR (87 aa)).

This sequence belongs to the Aux/IAA family. As to quaternary structure, homodimers and heterodimers.

The protein resides in the nucleus. Aux/IAA proteins are short-lived transcriptional factors that function as repressors of early auxin response genes at low auxin concentrations. Repression is thought to result from the interaction with auxin response factors (ARFs), proteins that bind to the auxin-responsive promoter element (AuxRE). Formation of heterodimers with ARF proteins may alter their ability to modulate early auxin response genes expression. This chain is Auxin-responsive protein IAA32, found in Arabidopsis thaliana (Mouse-ear cress).